A 200-amino-acid polypeptide reads, in one-letter code: GTP cyclohydrolase-2 (200 aa).

Position 50–54 (50–54) interacts with GTP; it reads RVHSE. 3 residues coordinate Zn(2+): Cys55, Cys66, and Cys68. Residues Gln71, 93-95, and Thr115 contribute to the GTP site; that span reads EGR. Asp127 functions as the Proton acceptor in the catalytic mechanism. Arg129 functions as the Nucleophile in the catalytic mechanism. GTP is bound by residues Thr150 and Lys155.

Belongs to the GTP cyclohydrolase II family. Zn(2+) serves as cofactor.

It carries out the reaction GTP + 4 H2O = 2,5-diamino-6-hydroxy-4-(5-phosphoribosylamino)-pyrimidine + formate + 2 phosphate + 3 H(+). It participates in cofactor biosynthesis; riboflavin biosynthesis; 5-amino-6-(D-ribitylamino)uracil from GTP: step 1/4. Catalyzes the conversion of GTP to 2,5-diamino-6-ribosylamino-4(3H)-pyrimidinone 5'-phosphate (DARP), formate and pyrophosphate. The chain is GTP cyclohydrolase-2 from Acinetobacter baumannii (strain SDF).